The primary structure comprises 700 residues: Glycine--tRNA ligase beta subunit (700 aa).

The protein belongs to the class-II aminoacyl-tRNA synthetase family. In terms of assembly, tetramer of two alpha and two beta subunits.

Its subcellular location is the cytoplasm. The enzyme catalyses tRNA(Gly) + glycine + ATP = glycyl-tRNA(Gly) + AMP + diphosphate. This Helicobacter pylori (strain Shi470) protein is Glycine--tRNA ligase beta subunit.